The chain runs to 372 residues: Germination protease (372 aa).

A propeptide spanning residues 1–15 (MVKELNLEQYNVRTD) is cleaved from the precursor.

This sequence belongs to the peptidase A25 family. As to quaternary structure, homotetramer. Post-translationally, autoproteolytically processed. The inactive tetrameric zymogen termed p46 autoprocesses to a smaller form termed p41, which is active only during spore germination.

It carries out the reaction Endopeptidase action with P4 Glu or Asp, P1 preferably Glu &gt; Asp, P1' hydrophobic and P2' Ala.. Its function is as follows. Initiates the rapid degradation of small, acid-soluble proteins during spore germination. This chain is Germination protease, found in Halalkalibacterium halodurans (strain ATCC BAA-125 / DSM 18197 / FERM 7344 / JCM 9153 / C-125) (Bacillus halodurans).